Reading from the N-terminus, the 390-residue chain is Transcription factor bHLH76 (390 aa).

The interval 147-217 is disordered; sequence NVSEDSQSSG…SEKQPSDSLK (71 aa). Basic and acidic residues predominate over residues 207 to 217; sequence NSEKQPSDSLK. A bHLH domain is found at 229 to 279; it reads QATNSHSLAERVRREKISERMKFLQDLVPGCDKVTGKAVMLDEIINYVQSL.

As to quaternary structure, homodimer. Interacts with IBH1. Binds reversibly to CRY2 after blue light illumination. As to expression, expressed constitutively in roots, leaves, stems, and flowers.

The protein localises to the nucleus. Transcriptional activator involved in cell elongation. Regulates the expression of a subset of genes involved in cell expansion by binding to the G-box motif. Binds to chromatin DNA of the FT gene and promotes its expression, and thus triggers flowering in response to blue light. The chain is Transcription factor bHLH76 (BHLH76) from Arabidopsis thaliana (Mouse-ear cress).